The primary structure comprises 169 residues: Protein-export protein SecB (169 aa).

This sequence belongs to the SecB family. In terms of assembly, homotetramer, a dimer of dimers. One homotetramer interacts with 1 SecA dimer.

It localises to the cytoplasm. In terms of biological role, one of the proteins required for the normal export of preproteins out of the cell cytoplasm. It is a molecular chaperone that binds to a subset of precursor proteins, maintaining them in a translocation-competent state. It also specifically binds to its receptor SecA. In Haemophilus influenzae (strain 86-028NP), this protein is Protein-export protein SecB.